Reading from the N-terminus, the 389-residue chain is Acetylornithine deacetylase (389 aa).

His85 is a binding site for Zn(2+). Residue Asp87 is part of the active site. Zn(2+) is bound at residue Asp117. Glu149 is an active-site residue. Positions 150, 174, and 360 each coordinate Zn(2+).

The protein belongs to the peptidase M20A family. ArgE subfamily. Homodimer. Zn(2+) serves as cofactor. Requires Co(2+) as cofactor. The cofactor is glutathione.

It is found in the cytoplasm. It catalyses the reaction N(2)-acetyl-L-ornithine + H2O = L-ornithine + acetate. It functions in the pathway amino-acid biosynthesis; L-arginine biosynthesis; L-ornithine from N(2)-acetyl-L-ornithine (linear): step 1/1. Its function is as follows. Catalyzes the hydrolysis of the amide bond of N(2)-acetylated L-amino acids. Cleaves the acetyl group from N-acetyl-L-ornithine to form L-ornithine, an intermediate in L-arginine biosynthesis pathway, and a branchpoint in the synthesis of polyamines. This Yersinia pseudotuberculosis serotype O:1b (strain IP 31758) protein is Acetylornithine deacetylase.